The following is a 1448-amino-acid chain: Murinoglobulin-2 (1448 aa).

The first 24 residues, 1 to 24 (MWKNREAQLCLFSVLLAFLPSASL), serve as a signal peptide directing secretion. 3 disulfides stabilise this stretch: Cys48/Cys86, Cys245/Cys277, and Cys263/Cys289. N-linked (GlcNAc...) asparagine glycosylation occurs at Asn55. Asn295, Asn315, Asn387, and Asn502 each carry an N-linked (GlcNAc...) asparagine glycan. Cystine bridges form between Cys462-Cys556, Cys588-Cys748, and Cys636-Cys681. Positions 678–709 (PTYCYDLPKEPPRKDPPRKDPEPKDTVVETIR) are bait region. Asn751 and Asn846 each carry an N-linked (GlcNAc...) asparagine glycan. 4 cysteine pairs are disulfide-bonded: Cys824–Cys860, Cys898–Cys1295, Cys1056–Cys1101, and Cys1326–Cys1441. Residues 949 to 952 (CGEQ) constitute a cross-link (isoglutamyl cysteine thioester (Cys-Gln)). Asn968 is a glycosylation site (N-linked (GlcNAc...) asparagine). 3 N-linked (GlcNAc...) asparagine glycosylation sites follow: Asn1114, Asn1285, and Asn1398.

It belongs to the protease inhibitor I39 (alpha-2-macroglobulin) family. Monomer.

Its subcellular location is the secreted. Its function is as follows. A proteinase activates the inhibitor by specific proteolysis in the bait region, which, by an unknown mechanism leads to reaction at the cysteinyl-glutamyl internal thiol ester site and to a conformational change, whereby the proteinase is trapped and/or covalently bound to the inhibitor. While in the tetrameric proteinase inhibitors steric inhibition is sufficiently strong, monomeric forms need a covalent linkage between the activated glutamyl residue of the original thiol ester and a terminal amino group of a lysine or another nucleophilic group on the proteinase, for inhibition to be effective. The protein is Murinoglobulin-2 of Rattus norvegicus (Rat).